A 148-amino-acid polypeptide reads, in one-letter code: Small ribosomal subunit protein bS16 (148 aa).

A disordered region spans residues 106–148; that stretch reads QAAARAAAGAEDRPATTPKKAKKSGSAEEAEAAPATDAPAAGQ. A compositionally biased stretch (low complexity) spans 137–148; it reads AAPATDAPAAGQ.

The protein belongs to the bacterial ribosomal protein bS16 family.

The protein is Small ribosomal subunit protein bS16 of Frankia casuarinae (strain DSM 45818 / CECT 9043 / HFP020203 / CcI3).